A 909-amino-acid polypeptide reads, in one-letter code: Myb-like protein Q (909 aa).

3 disordered regions span residues 15–65 (TTNN…QQQQ), 84–149 (QQQN…QQIL), and 216–280 (SAPS…KGPW). A compositionally biased stretch (low complexity) spans 17–46 (NNNSNNNNNNNNNNNNNNNNNNNNNINQNH). The span at 47–56 (QHQHQHHHHQ) shows a compositional bias: basic residues. Over residues 84–126 (QQQNYGESTTSTSMIPPSITTSLTPLTPTLSSQPQNIQQQQQQ) the composition is skewed to low complexity. The span at 127–139 (QHHHQQQHHHHHQ) shows a compositional bias: basic residues. Residues 216 to 226 (SAPSTPLSMSP) are compositionally biased toward polar residues. HTH myb-type domains lie at 272-327 (SPGI…SPEV) and 328-378 (RKTN…LKKI). 2 DNA-binding regions (H-T-H motif) span residues 300–323 (WSSIAAKIPGRIGKQCRERWFNHL) and 351–374 (WTAISKMLDGRPANAIKNHWNSTL). Residues 379-389 (GGDSKSLNKEK) are compositionally biased toward basic and acidic residues. Disordered regions lie at residues 379–482 (GGDS…NTAI), 497–531 (QTTPNSSPSLSSKKTHDKQKVPQSPKNSKQQQTQQ), 616–642 (SMEQHHYQQQQQAQQQQHQQQQHQQQQ), 672–748 (YQQQ…HPIE), and 826–855 (LNTTTTTTNNNNNNNNNNNNNNNNNNIPTP). Acidic residues predominate over residues 390–401 (DDDDDDDEDAED). Low complexity-rich tracts occupy residues 415-431 (SSSSTTTTTTTTTTNSS) and 444-482 (STTTSTNNLNNSTNSTNSINNNNNNNNNNNNSSNTNTAI). Positions 497 to 508 (QTTPNSSPSLSS) are enriched in polar residues. Composition is skewed to low complexity over residues 622–642 (YQQQQQAQQQQHQQQQHQQQQ), 672–726 (YQQQ…QQQQ), 733–744 (NSNNTDTTFSNS), and 826–851 (LNTTTTTTNNNNNNNNNNNNNNNNNN).

The protein localises to the nucleus. The chain is Myb-like protein Q (mybQ) from Dictyostelium discoideum (Social amoeba).